The sequence spans 137 residues: Flagellar basal body rod protein FlgB (137 aa).

This sequence belongs to the flagella basal body rod proteins family. In terms of assembly, the basal body constitutes a major portion of the flagellar organelle and consists of a number of rings mounted on a central rod. In Gram-negative bacteria, at least four rings, L, P, S and M are present, whereas Gram-positive bacteria lack the L and P rings. The rod consists of about 26 subunits of FlgG in the distal portion, and FlgB, FlgC and FlgF build up the proximal portion of the rod with about 6 subunits each. Rod assembly occurs by export via the flagellum-specific pathway of its constituent proteins and by their incorporation into the rod structure in the probable order of FlgB, FlgC, FlgF and FlgG. Another protein, FliE, also assembles onto the stable rod structure.

It is found in the bacterial flagellum basal body. In terms of biological role, structural component of flagellum, the bacterial motility apparatus. Part of the rod structure of flagellar basal body. This is Flagellar basal body rod protein FlgB from Yersinia ruckeri.